The sequence spans 426 residues: Glutamate-1-semialdehyde 2,1-aminomutase (426 aa).

K265 is modified (N6-(pyridoxal phosphate)lysine).

Belongs to the class-III pyridoxal-phosphate-dependent aminotransferase family. HemL subfamily. Homodimer. It depends on pyridoxal 5'-phosphate as a cofactor.

Its subcellular location is the cytoplasm. It carries out the reaction (S)-4-amino-5-oxopentanoate = 5-aminolevulinate. Its pathway is porphyrin-containing compound metabolism; protoporphyrin-IX biosynthesis; 5-aminolevulinate from L-glutamyl-tRNA(Glu): step 2/2. This is Glutamate-1-semialdehyde 2,1-aminomutase from Alteromonas mediterranea (strain DSM 17117 / CIP 110805 / LMG 28347 / Deep ecotype).